Here is a 490-residue protein sequence, read N- to C-terminus: Colicin-10 (490 aa).

Residues 1 to 20 (MDKVTDNSPDVESTESTEGS) are compositionally biased toward polar residues. Disordered regions lie at residues 1 to 29 (MDKV…VDTG) and 146 to 171 (QKAR…EIAR). A compositionally biased stretch (basic and acidic residues) spans 146–170 (QKAREEAEAAEKALREAERQRDEIA). Residues 447–467 (IVALMFSFIVGAPLGFWGIAI) traverse the membrane as a helical segment.

It belongs to the channel forming colicin family.

It is found in the host membrane. Functionally, this colicin is a channel-forming colicin. This class of transmembrane toxins depolarize the cytoplasmic membrane, leading to dissipation of cellular energy. Its function is as follows. Colicins are polypeptide toxins produced by and active against E.coli and closely related bacteria. The chain is Colicin-10 (cta) from Escherichia coli.